We begin with the raw amino-acid sequence, 407 residues long: CCCH-type zinc finger protein oma-1 (407 aa).

The segment at 1 to 39 is disordered; it reads MNVNGENNEKIDEHHLESSLAGVPTLPVSPLDHAKDLSQ. A compositionally biased stretch (basic and acidic residues) spans 7–17; the sequence is NNEKIDEHHLE. A required for taf-4 binding region spans residues 46-80; it reads IGDLVTQTANLIAIKKQLLEDIAFNQHIQSMQVRA. C3H1-type zinc fingers lie at residues 112–140 and 154–182; these read SYKTVICQAWLESKTCSFADNCRFAHGEE and KYKTKLCDKYTTTGLCPYGKRCLFIHPDH. Thr-239 carries the post-translational modification Phosphothreonine; by mbk-2 and GSK3. At Ser-302 the chain carries Phosphoserine; by mbk-2. Thr-339 carries the post-translational modification Phosphothreonine; by GSK3.

In terms of assembly, interacts with taf-4 (via C-terminus). Interacts with ifet-1. Component of a ribonucleoprotein particle complex that interacts with cgh-1 and car-1 in an RNA-dependent manner. Association with many proteins is dependent on the presence of RNA. In terms of processing, phosphorylation by mbk-2 and by gsk-3 are required for its rapid degradation following meiosis II. Exclusively expressed in the hermaphrodite gonad. Expressed prior to oocyte division. Widely distributed throughout gonadal oocytes from the mitotic stage to the developing diakinesis stage. Expressed in sperm.

Its subcellular location is the cytoplasm. The protein resides in the cytoplasmic granule. It is found in the nucleus. Functionally, zinc-finger RNA-binding protein that binds to 5'-UA[AU]-3' motifs in the 3'-UTR of maternal mRNAs to suppress translation in oocytes and embryos. Acts as a ribonucleoprotein particle component that may exert part of its function within cytoplasmic foci of unfertilized oocytes. Acts redundantly with oma-2 to control the temporal expression and distribution of maternal proteins and thereby promote meiotic progression, oocyte maturation, fertilization and embryonic development. Recruits the translational repressor ifet-1 to the 3'-UTR of mei-1 and zif-1 to negatively regulate their translation. By suppressing the translation of the E3 ligase zif-1, may in turn play a role in the stabilization of zif-1 targets such as the maternal transcriptional repressor protein pie-1. Following fertilization, sequesters the transcription initiation factor, taf-4, in the cytoplasm, which prevents its nuclear localization and thus allows for transcriptional suppression in early embryos, but not in oocytes. Also, together with oma-2, is involved in P-granule distribution during embryonic development. In Caenorhabditis elegans, this protein is CCCH-type zinc finger protein oma-1.